A 508-amino-acid chain; its full sequence is Cytochrome P450 monooxygenase orf4 (508 aa).

Residue Cys447 coordinates heme.

Belongs to the cytochrome P450 family. It depends on heme as a cofactor.

It participates in mycotoxin biosynthesis. Its function is as follows. Cytochrome P450 monooxygenase; part of the gene cluster that mediates the biosynthesis of brefeldin A (BFA), a protein transport inhibitor that shows antiviral, antifungal, and antitumor properties. The proposed biosynthesis of BFA involves formation of an acyclic polyketide chain that is differentially tailored throughout the backbone. The highly reducing polyketide synthase Bref-PKS is proposed to synthesize the precisely reduced octaketide precursor, which could then be directly offloaded by the thiohydrolase enzyme Bref-TH followed by a cytochrome P450 monooxygenase-mediated formation of the cyclopentane ring and macrocyclization to afford 7-deoxy BFA. Alternatively, the first ring annulation can also occur on the ACP-tethered intermediate before the thiohydrolase release and lactonization. The C7-hydroxylation by another cytochrome P450 monooxygenase is believed to be the final step in the process to obtain the final structure of BFA. In addition to the HRPKS Bref-PKS and the thiohydrolase Bref-TH, the brefeldin A biosynthesis cluster contains 4 cytochrome p450 monooxygenases (called orf3 to orf6), as well a the probable cluster-specific transcription regulator orf8. The sequence is that of Cytochrome P450 monooxygenase orf4 from Eupenicillium brefeldianum (Penicillium brefeldianum).